Consider the following 393-residue polypeptide: S-adenosylmethionine synthase (393 aa).

Residue His16 participates in ATP binding. Mg(2+) is bound at residue Asp18. K(+) is bound at residue Glu44. The L-methionine site is built by Glu57 and Gln100. The tract at residues 100–110 is flexible loop; it reads QSNDIAQGVDH. ATP contacts are provided by residues 167-169, 238-239, Asp247, 253-254, Ala270, and Lys274; these read DAK, RF, and RK. Residue Asp247 participates in L-methionine binding. Lys278 contributes to the L-methionine binding site.

The protein belongs to the AdoMet synthase family. Homotetramer; dimer of dimers. It depends on Mg(2+) as a cofactor. K(+) is required as a cofactor.

The protein localises to the cytoplasm. The enzyme catalyses L-methionine + ATP + H2O = S-adenosyl-L-methionine + phosphate + diphosphate. The protein operates within amino-acid biosynthesis; S-adenosyl-L-methionine biosynthesis; S-adenosyl-L-methionine from L-methionine: step 1/1. Its function is as follows. Catalyzes the formation of S-adenosylmethionine (AdoMet) from methionine and ATP. The overall synthetic reaction is composed of two sequential steps, AdoMet formation and the subsequent tripolyphosphate hydrolysis which occurs prior to release of AdoMet from the enzyme. This Acidovorax ebreus (strain TPSY) (Diaphorobacter sp. (strain TPSY)) protein is S-adenosylmethionine synthase.